Consider the following 369-residue polypeptide: Flagellar P-ring protein 2 (369 aa).

Positions 1 to 24 (MCAFAAILSLLSVLLMATSRSSDA) are cleaved as a signal peptide.

It belongs to the FlgI family. In terms of assembly, the basal body constitutes a major portion of the flagellar organelle and consists of four rings (L,P,S, and M) mounted on a central rod.

It is found in the periplasm. It localises to the bacterial flagellum basal body. Functionally, assembles around the rod to form the L-ring and probably protects the motor/basal body from shearing forces during rotation. The chain is Flagellar P-ring protein 2 from Burkholderia thailandensis (strain ATCC 700388 / DSM 13276 / CCUG 48851 / CIP 106301 / E264).